Reading from the N-terminus, the 269-residue chain is Staphylococcal secretory antigen ssaA2 (269 aa).

A signal peptide spans 1–27; it reads MKKIATATIATAGFATIAIASGNQAHA. 7 repeat units span residues 83-85, 88-90, 91-93, 97-99, 103-105, 106-108, and 115-117. The segment at 83 to 115 is 7 X 3 AA repeats of Y-[NS]-N; sequence YNNYSYNNYNNGYSYNNYSRYNNYSNNNQSYNY. In terms of domain architecture, Peptidase C51 spans 148–269; the sequence is MAPSSNGRSI…SQAAGYNFIH (122 aa).

It is found in the secreted. In terms of biological role, not known; immunogenic protein. This Staphylococcus aureus (strain MRSA252) protein is Staphylococcal secretory antigen ssaA2 (ssaA2).